A 643-amino-acid polypeptide reads, in one-letter code: Protein cueball (643 aa).

Residues 1–21 (MMIWVPALIFLSACLLPRSNG) form the signal peptide. Residues 22 to 530 (TPLEWDFAVT…VCQTPFVWTS (509 aa)) are Extracellular-facing. Asn-77 and Asn-103 each carry an N-linked (GlcNAc...) asparagine glycan. LDL-receptor class B repeat units lie at residues 116–163 (RNLF…DICR), 164–208 (RKLY…DQLS), and 209–254 (DRLF…TNDA). N-linked (GlcNAc...) asparagine glycosylation is present at Asn-172. Over residues 276 to 290 (ATTTVRPEVESSTDG) the composition is skewed to polar residues. A disordered region spans residues 276-303 (ATTTVRPEVESSTDGTESESKQESEPVE). An N-linked (GlcNAc...) asparagine glycan is attached at Asn-312. 3 consecutive EGF-like domains span residues 363–397 (RMDQ…SRCE), 398–429 (IREC…FTGE), and 432–470 (EVSN…ERCE). 7 cysteine pairs are disulfide-bonded: Cys-372–Cys-385, Cys-387–Cys-396, Cys-401–Cys-410, Cys-405–Cys-420, Cys-436–Cys-446, Cys-440–Cys-458, and Cys-460–Cys-469. Asn-472 and Asn-507 each carry an N-linked (GlcNAc...) asparagine glycan. Residues 531 to 551 (SVIIILVVGIVFSLLLITTII) form a helical membrane-spanning segment. The Cytoplasmic segment spans residues 552-643 (HGIRRLYKPK…LIHNMEDDLY (92 aa)).

Belongs to the cueball family.

It localises to the cell membrane. Has a role in spermatogenesis and oogenesis. This chain is Protein cueball, found in Drosophila ananassae (Fruit fly).